The following is a 214-amino-acid chain: Leucyl/phenylalanyl-tRNA--protein transferase (214 aa).

This sequence belongs to the L/F-transferase family.

The protein resides in the cytoplasm. The catalysed reaction is N-terminal L-lysyl-[protein] + L-leucyl-tRNA(Leu) = N-terminal L-leucyl-L-lysyl-[protein] + tRNA(Leu) + H(+). It carries out the reaction N-terminal L-arginyl-[protein] + L-leucyl-tRNA(Leu) = N-terminal L-leucyl-L-arginyl-[protein] + tRNA(Leu) + H(+). It catalyses the reaction L-phenylalanyl-tRNA(Phe) + an N-terminal L-alpha-aminoacyl-[protein] = an N-terminal L-phenylalanyl-L-alpha-aminoacyl-[protein] + tRNA(Phe). In terms of biological role, functions in the N-end rule pathway of protein degradation where it conjugates Leu, Phe and, less efficiently, Met from aminoacyl-tRNAs to the N-termini of proteins containing an N-terminal arginine or lysine. This chain is Leucyl/phenylalanyl-tRNA--protein transferase, found in Cereibacter sphaeroides (strain ATCC 17029 / ATH 2.4.9) (Rhodobacter sphaeroides).